A 92-amino-acid polypeptide reads, in one-letter code: Small ribosomal subunit protein uS15 (92 aa).

This sequence belongs to the universal ribosomal protein uS15 family. Part of the 30S ribosomal subunit. Forms a bridge to the 50S subunit in the 70S ribosome, contacting the 23S rRNA.

Its function is as follows. One of the primary rRNA binding proteins, it binds directly to 16S rRNA where it helps nucleate assembly of the platform of the 30S subunit by binding and bridging several RNA helices of the 16S rRNA. In terms of biological role, forms an intersubunit bridge (bridge B4) with the 23S rRNA of the 50S subunit in the ribosome. This is Small ribosomal subunit protein uS15 from Symbiobacterium thermophilum (strain DSM 24528 / JCM 14929 / IAM 14863 / T).